Here is a 332-residue protein sequence, read N- to C-terminus: tRNA dimethylallyltransferase (332 aa).

14–21 (GPTASGKT) contributes to the ATP binding site. 16-21 (TASGKT) is a binding site for substrate. The segment at 39–42 (DSMQ) is interaction with substrate tRNA. The interval 313–332 (KRSSKHDCKPQHPRSSTREL) is disordered. Residues 317–332 (KHDCKPQHPRSSTREL) show a composition bias toward basic and acidic residues.

The protein belongs to the IPP transferase family. Monomer. Requires Mg(2+) as cofactor.

It carries out the reaction adenosine(37) in tRNA + dimethylallyl diphosphate = N(6)-dimethylallyladenosine(37) in tRNA + diphosphate. In terms of biological role, catalyzes the transfer of a dimethylallyl group onto the adenine at position 37 in tRNAs that read codons beginning with uridine, leading to the formation of N6-(dimethylallyl)adenosine (i(6)A). The chain is tRNA dimethylallyltransferase from Staphylococcus haemolyticus (strain JCSC1435).